The sequence spans 166 residues: Interferon gamma (166 aa).

The first 23 residues, 1–23, serve as a signal peptide directing secretion; the sequence is MKYTSSFLALLLSVLLGFSGSYG. Gln24 is subject to Pyrrolidone carboxylic acid. N-linked (GlcNAc...) asparagine glycosylation is found at Asn39 and Asn106.

Belongs to the type II (or gamma) interferon family. Homodimer. Interacts with IFNGR1 (via extracellular domain); this interaction promotes IFNGR1 dimerization. Released primarily from activated T lymphocytes.

The protein localises to the secreted. In terms of biological role, type II interferon produced by immune cells such as T-cells and NK cells that plays crucial roles in antimicrobial, antiviral, and antitumor responses by activating effector immune cells and enhancing antigen presentation. Primarily signals through the JAK-STAT pathway after interaction with its receptor IFNGR1 to affect gene regulation. Upon IFNG binding, IFNGR1 intracellular domain opens out to allow association of downstream signaling components JAK2, JAK1 and STAT1, leading to STAT1 activation, nuclear translocation and transcription of IFNG-regulated genes. Many of the induced genes are transcription factors such as IRF1 that are able to further drive regulation of a next wave of transcription. Plays a role in class I antigen presentation pathway by inducing a replacement of catalytic proteasome subunits with immunoproteasome subunits. In turn, increases the quantity, quality, and repertoire of peptides for class I MHC loading. Increases the efficiency of peptide generation also by inducing the expression of activator PA28 that associates with the proteasome and alters its proteolytic cleavage preference. Up-regulates as well MHC II complexes on the cell surface by promoting expression of several key molecules such as cathepsins B/CTSB, H/CTSH, and L/CTSL. Participates in the regulation of hematopoietic stem cells during development and under homeostatic conditions by affecting their development, quiescence, and differentiation. The sequence is that of Interferon gamma (IFNG) from Capra hircus (Goat).